Here is a 278-residue protein sequence, read N- to C-terminus: Coiled-coil domain-containing protein 121 (278 aa).

2 coiled-coil regions span residues 1 to 30 and 105 to 243; these read MTDLNKHIKQAQTQRKQLLEESRELHREKL and QAMR…LIQA. Residues 253–278 are disordered; that stretch reads QCLNRQDVPKTTPSLPQGTKSRINPK.

The sequence is that of Coiled-coil domain-containing protein 121 (CCDC121) from Homo sapiens (Human).